The sequence spans 577 residues: Thiol:disulfide interchange protein DsbD (577 aa).

An N-terminal signal peptide occupies residues 1–23 (MAQRIFTLIFLLWTAVGTPQVAA). Intrachain disulfides connect Cys-131/Cys-137 and Cys-194/Cys-316. Helical transmembrane passes span 182-202 (ALLI…YPLI), 225-245 (YVQG…AAGL), 255-275 (YILI…FGLY), 308-328 (LAGL…LLYI), 338-358 (GGTL…VTLF), 369-389 (WMQY…VFLL), and 396-416 (AWGI…ALML). One can recognise a Thioredoxin domain in the interval 437-577 (VISAKPLQDW…FQAHLQKFSP (141 aa)). Cys-492 and Cys-495 are joined by a disulfide.

This sequence belongs to the thioredoxin family. DsbD subfamily.

The protein resides in the cell inner membrane. The enzyme catalyses [protein]-dithiol + NAD(+) = [protein]-disulfide + NADH + H(+). It carries out the reaction [protein]-dithiol + NADP(+) = [protein]-disulfide + NADPH + H(+). Required to facilitate the formation of correct disulfide bonds in some periplasmic proteins and for the assembly of the periplasmic c-type cytochromes. Acts by transferring electrons from cytoplasmic thioredoxin to the periplasm. This transfer involves a cascade of disulfide bond formation and reduction steps. The polypeptide is Thiol:disulfide interchange protein DsbD (Pectobacterium atrosepticum (strain SCRI 1043 / ATCC BAA-672) (Erwinia carotovora subsp. atroseptica)).